The sequence spans 299 residues: 4-diphosphocytidyl-2-C-methyl-D-erythritol kinase (299 aa).

Residue Lys17 is part of the active site. Residue 99-109 (PLASGLGGGSS) participates in ATP binding. Asp142 is a catalytic residue.

Belongs to the GHMP kinase family. IspE subfamily.

It carries out the reaction 4-CDP-2-C-methyl-D-erythritol + ATP = 4-CDP-2-C-methyl-D-erythritol 2-phosphate + ADP + H(+). The protein operates within isoprenoid biosynthesis; isopentenyl diphosphate biosynthesis via DXP pathway; isopentenyl diphosphate from 1-deoxy-D-xylulose 5-phosphate: step 3/6. In terms of biological role, catalyzes the phosphorylation of the position 2 hydroxy group of 4-diphosphocytidyl-2C-methyl-D-erythritol. The sequence is that of 4-diphosphocytidyl-2-C-methyl-D-erythritol kinase from Deinococcus radiodurans (strain ATCC 13939 / DSM 20539 / JCM 16871 / CCUG 27074 / LMG 4051 / NBRC 15346 / NCIMB 9279 / VKM B-1422 / R1).